A 311-amino-acid polypeptide reads, in one-letter code: Putative mitochondrial transporter UCP3 (311 aa).

At 1-10 (MVGLQPSERP) the chain is on the mitochondrial intermembrane side. A helical membrane pass occupies residues 11 to 32 (PTTSVKFLAAGTAACFADLLTF). 3 Solcar repeats span residues 11-105 (PTTS…VKQF), 114-205 (SSII…IKEK), and 214-299 (DNFP…MKRA). Residues 33-76 (PLDTAKVRLQIQGENQAALAARSAQYRGVLGTILTMVRTEGPRS) are Mitochondrial matrix-facing. A helical transmembrane segment spans residues 77-99 (LYSGLVAGLQRQMSFASIRIGLY). The Mitochondrial intermembrane portion of the chain corresponds to 100–119 (DSVKQFYTPKGSDHSSIITR). A helical transmembrane segment spans residues 120 to 136 (ILAGCTTGAMAVTCAQP). The Mitochondrial matrix segment spans residues 137–182 (TDVVKIRFQASMHTGLGGNRKYSGTMDAYRTIAREEGVRGLWKGIL). A helical membrane pass occupies residues 183–199 (PNITRNAIVNCGEMVTY). Over 200–216 (DIIKEKLLDYHLLTDNF) the chain is Mitochondrial intermembrane. Residues 217–236 (PCHFVSAFGAGFCATLVASP) form a helical membrane-spanning segment. Topologically, residues 237–270 (VDVVKTRYMNSPPGQYHSPFDCMLKMVTQEGPTA) are mitochondrial matrix. A helical membrane pass occupies residues 271–293 (FYKGFTPSFLRLGSWNVVMFVTY). The segment at 278-300 (SFLRLGSWNVVMFVTYEQMKRAL) is purine nucleotide binding. The Mitochondrial intermembrane portion of the chain corresponds to 294-311 (EQMKRALMKVQMLRDSPF).

The protein belongs to the mitochondrial carrier (TC 2.A.29) family. Interacts with HAX1; the interaction is direct and calcium-dependent.

The protein localises to the mitochondrion inner membrane. Putative transmembrane transporter that plays a role in mitochondrial metabolism via an as yet unclear mechanism. Originally, this mitochondrial protein was thought to act as a proton transmembrane transporter from the mitochondrial intermembrane space into the matrix, causing proton leaks through the inner mitochondrial membrane, thereby uncoupling mitochondrial membrane potential generation from ATP synthesis. However, this function is controversial and uncoupling may not be the function, or at least not the main function, but rather a consequence of more conventional metabolite transporter activity. The chain is Putative mitochondrial transporter UCP3 from Bos taurus (Bovine).